Consider the following 86-residue polypeptide: Photosystem I reaction center subunit PsaK 1 (86 aa).

Residues 1–8 (MLTSTLLA) constitute a propeptide that is removed on maturation. 2 consecutive transmembrane segments (helical) span residues 14 to 34 (LEWS…AITF) and 60 to 80 (PALL…VLGL).

Belongs to the PsaG/PsaK family. In terms of assembly, the cyanobacterial PSI reaction center is composed of one copy each of PsaA,B,C,D,E,F,I,J,K,L,M and X, and forms dimeric and tetrameric complexes.

It localises to the cellular thylakoid membrane. This is Photosystem I reaction center subunit PsaK 1 (psaK1) from Nostoc sp. (strain PCC 7120 / SAG 25.82 / UTEX 2576).